A 422-amino-acid polypeptide reads, in one-letter code: Nucleoprotein (422 aa).

Composition is skewed to polar residues over residues 1 to 12 and 22 to 31; these read MSDNGPQSNQRS and TDSTDNNQNG. Residues 1–52 form a disordered region; that stretch reads MSDNGPQSNQRSAPRITFGGPTDSTDNNQNGGRNGARPKQRRPQGLPNNTAS. RNA-binding regions lie at residues 42–187 and 45–181; these read RPQG…SSRS and GLPN…RGGS. A CoV N NTD domain is found at 49-176; it reads NTASWFTALT…TLPKGFYAEG (128 aa). RNA is bound by residues R93, R108, and R150. Disordered stretches follow at residues 167-214, 234-287, and 362-422; these read TLPK…MASG, KVSG…QGNF, and KTFP…STQA. S177 is modified (phosphoserine; by host). An SR region region spans residues 177 to 204; that stretch reads SRGGSQASSRSSSRSRGNSRNSTPGSSR. Low complexity-rich tracts occupy residues 180–207 and 234–250; these read GSQA…RGNS and KVSG…VTKK. The 118-residue stretch at 248–365 folds into the CoV N CTD domain; the sequence is TKKSAAEASK…KHIDAYKTFP (118 aa). The Nuclear localization signal motif lies at 257-265; the sequence is KKPRQKRTA. The dimerization stretch occupies residues 259–362; the sequence is PRQKRTATKQ…LLNKHIDAYK (104 aa). Residues 368–379 show a composition bias toward basic and acidic residues; it reads EPKKDKKKKTDE. The span at 406 to 422 shows a compositional bias: polar residues; sequence RQLQNSMSGASADSTQA.

It belongs to the betacoronavirus nucleocapsid protein family. As to quaternary structure, homooligomer. Both monomeric and oligomeric forms interact with RNA. Interacts with protein M. Interacts with protein E. May bind to host HNRNPA1. Interacts with NSP3; this interaction serves to tether the genome to the newly translated replicase-transcriptase complex at a very early stage of infection. May interact with host SMAD3. Interacts with host PPIA/CYPA. Post-translationally, proteolytically cleaved by host CASP6. The cleavage leads to two fragments and facilitates viral replication by inhibiting host IFN signaling. The two fragments may interact with IRF3 inhibiting its nuclear translocation after activation and reduce the expression of IFNB and IFN-stimulated genes. In terms of processing, ADP-ribosylated. The ADP-ribosylation is retained in the virion during infection. Phosphorylated on serine and threonine residues. Phosphorylated by host GSK3A and GSK3B. Phosphorylation allows recruitment of host RNA helicase DDX1 which facilitates template readthrough and enables longer subgenomic mRNA synthesis. This promotes the solubility of homodimers that would otherwise aggregate. Host phosphatase would dephosphorylate the protein during assembly at M bound membranes.

It localises to the virion. Its subcellular location is the host endoplasmic reticulum-Golgi intermediate compartment. The protein resides in the host Golgi apparatus. It is found in the host cytoplasm. The protein localises to the host perinuclear region. It localises to the host nucleus. Packages the positive strand viral genome RNA into a helical ribonucleocapsid (RNP) and plays a fundamental role during virion assembly through its interactions with the viral genome and membrane protein M. Plays an important role in enhancing the efficiency of subgenomic viral RNA transcription as well as viral replication. May modulate transforming growth factor-beta signaling by binding host SMAD3. In Severe acute respiratory syndrome coronavirus (SARS-CoV), this protein is Nucleoprotein.